A 123-amino-acid polypeptide reads, in one-letter code: Histone H2B (123 aa).

Residues 1-30 (MPPKTSGKAAKKAGKAQKNITKTDKKKKRK) are disordered. The residue at position 2 (Pro2) is an N-methylproline; partial. Lys44 carries the N6-succinyllysine modification. O-linked (GlcNAc) serine glycosylation is present at Ser110. An N6-succinyllysine mark is found at Lys114 and Lys118. Lys118 participates in a covalent cross-link: Glycyl lysine isopeptide (Lys-Gly) (interchain with G-Cter in ubiquitin).

Belongs to the histone H2B family. The nucleosome is a histone octamer containing two molecules each of H2A, H2B, H3 and H4 assembled in one H3-H4 heterotetramer and two H2A-H2B heterodimers. The octamer wraps approximately 147 bp of DNA. Phosphorylated by the catalytic component of the Dbf4-dependent kinase (DDK) complex Cdc7. In terms of processing, monoubiquitination of Lys-118 by Bre1 gives a specific tag for epigenetic transcriptional activation and is also prerequisite for histone H3 'Lys-4' and 'Lys-79' methylation. Deubiquitination of Lys-118 by the SAGA complex is involved in activating transcription of a large subset of genes. Post-translationally, methylation at Pro-2 increases upon heat shock. GlcNAcylation at Ser-110 promotes monoubiquitination of Lys-118. It fluctuates in response to extracellular glucose, and associates with transcribed genes.

The protein resides in the nucleus. It localises to the chromosome. Functionally, core component of nucleosome. Nucleosomes wrap and compact DNA into chromatin, limiting DNA accessibility to the cellular machineries which require DNA as a template. Histones thereby play a central role in transcription regulation, DNA repair, DNA replication and chromosomal stability. DNA accessibility is regulated via a complex set of post-translational modifications of histones, also called histone code, and nucleosome remodeling. The chain is Histone H2B (His2B) from Drosophila erecta (Fruit fly).